The chain runs to 52 residues: Insulin (52 aa).

3 disulfide bridges follow: Cys7–Cys38, Cys19–Cys51, and Cys37–Cys42.

The protein belongs to the insulin family. Heterodimer of a B chain and an A chain linked by two disulfide bonds.

Its subcellular location is the secreted. Its function is as follows. Insulin decreases blood glucose concentration. It increases cell permeability to monosaccharides, amino acids and fatty acids. It accelerates glycolysis, the pentose phosphate cycle, and glycogen synthesis in liver. This is Insulin (ins) from Atractosteus spatula (Alligator gar).